Consider the following 372-residue polypeptide: Nickel transporter NicT (372 aa).

A run of 8 helical transmembrane segments spans residues 30–50, 55–75, 104–124, 152–172, 218–238, 245–265, 294–314, and 335–355; these read LMFA…TLLV, LSLG…TLGL, VGFF…VMLV, ISGA…VGIV, VGFL…LVLA, GLPW…MCLL, VTGL…LGLI, and TVGF…LLVW.

It belongs to the NiCoT transporter (TC 2.A.52) family.

It localises to the cell membrane. The catalysed reaction is Ni(2+)(in) = Ni(2+)(out). Export of the fluoroquinolone antibiotic norfloxacin is inhibited by the proton ionophore carbonyl cyanide m-chlorophenylhydrazone (CCCP). Nickel may influence the extrusion of antibiotics possibly by facilitating the proton motive force-dependent efflux process. Involved in nickel uptake. In addition, acts as a drug efflux pump and contributes to moderate tolerance towards different classes of antibiotics, including fluoroquinolones, aminoglycosides and the anti-TB drug isoniazid, with a preference for fluoroquinolones. The drug efflux function is probably dependent on proton motive force (pmf) or ion gradient, and might be facilitated by the presence of Ni(2+) ions. In Mycobacterium tuberculosis (strain ATCC 25618 / H37Rv), this protein is Nickel transporter NicT.